The following is a 2051-amino-acid chain: Fatty acid synthase subunit beta (2051 aa).

Methionine 1 carries the post-translational modification N-acetylmethionine. The tract at residues 1–468 (MDAYSTRPLT…VYDTFDGSDL (468 aa)) is acetyltransferase. Serine 274 (for acetyltransferase activity) is an active-site residue. Residues 480–868 (VDCIIRLPVK…TRGVMLWKEF (389 aa)) are enoyl reductase. Position 733 is a phosphothreonine (threonine 733). Serine 1121 carries the phosphoserine modification. The interval 1144–1626 (GSEINWRHAS…LPNTALKTSI (483 aa)) is dehydratase. Lysine 1364 is covalently cross-linked (Glycyl lysine isopeptide (Lys-Gly) (interchain with G-Cter in ubiquitin)). The region spanning 1523-1648 (NGSTLEQKVN…KFETRNEDDV (126 aa)) is the MaoC-like domain. The segment at 1627–1845 (QHVGMINGRK…MTMQVAVPRD (219 aa)) is malonyl/palmitoyl transferase. Catalysis depends on serine 1808, which acts as the For malonyltransferase activity.

It belongs to the fungal fatty acid synthetase subunit beta family. [Alpha(6)beta(6)] hexamers of two multifunctional subunits (alpha and beta).

It catalyses the reaction acetyl-CoA + n malonyl-CoA + 2n NADPH + 4n H(+) = a long-chain-acyl-CoA + n CoA + n CO2 + 2n NADP(+).. It carries out the reaction holo-[ACP] + acetyl-CoA = acetyl-[ACP] + CoA. The enzyme catalyses holo-[ACP] + malonyl-CoA = malonyl-[ACP] + CoA. The catalysed reaction is a (3R)-hydroxyacyl-[ACP] = a (2E)-enoyl-[ACP] + H2O. It catalyses the reaction a 2,3-saturated acyl-[ACP] + NAD(+) = a (2E)-enoyl-[ACP] + NADH + H(+). It carries out the reaction (9Z)-octadecenoyl-[ACP] + H2O = (9Z)-octadecenoate + holo-[ACP] + H(+). Its function is as follows. Fatty acid synthetase catalyzes the formation of long-chain fatty acids from acetyl-CoA, malonyl-CoA and NADPH. The beta subunit contains domains for: [acyl-carrier-protein] acetyltransferase and malonyltransferase, S-acyl fatty acid synthase thioesterase, enoyl-[acyl-carrier-protein] reductase, and 3-hydroxypalmitoyl-[acyl-carrier-protein] dehydratase. This Saccharomyces cerevisiae (strain ATCC 204508 / S288c) (Baker's yeast) protein is Fatty acid synthase subunit beta (FAS1).